The sequence spans 266 residues: Indole-3-glycerol phosphate synthase (266 aa).

The protein belongs to the TrpC family.

It catalyses the reaction 1-(2-carboxyphenylamino)-1-deoxy-D-ribulose 5-phosphate + H(+) = (1S,2R)-1-C-(indol-3-yl)glycerol 3-phosphate + CO2 + H2O. It participates in amino-acid biosynthesis; L-tryptophan biosynthesis; L-tryptophan from chorismate: step 4/5. The chain is Indole-3-glycerol phosphate synthase from Acidovorax sp. (strain JS42).